The following is a 336-amino-acid chain: MSAQVIAIDAMGGDFGPRSIVQASIACLSATPSLHLTLVGQPSLLEELISGQTAVDRARLTITPASEVITMDEKPSQALRGKPDSSMRVALELLRDEKVQACVSAGNTGALMALSRYVLKTLPGIDRPAMVAAIPTQRGYCQLLDLGANVDCSAEHLLQFAVMGSVAAETLGIVRPRVALLNIGTEDIKGNQQVKLAASLLQQARGLNYIGFVEGDGLYRGEADVVVCDGFVGNILLKSSEGLATMIAARIEALFRQNLLSRAVGALALPLMRRLQADLAPARHNGASFLGLQGIVVKSHGSAGVQGFQSAIQRALIEIQEDLPRRLHGRLEDLLL.

The protein belongs to the PlsX family. As to quaternary structure, homodimer. Probably interacts with PlsY.

The protein localises to the cytoplasm. It carries out the reaction a fatty acyl-[ACP] + phosphate = an acyl phosphate + holo-[ACP]. Its pathway is lipid metabolism; phospholipid metabolism. Its function is as follows. Catalyzes the reversible formation of acyl-phosphate (acyl-PO(4)) from acyl-[acyl-carrier-protein] (acyl-ACP). This enzyme utilizes acyl-ACP as fatty acyl donor, but not acyl-CoA. This is Phosphate acyltransferase from Pseudomonas fluorescens (strain ATCC BAA-477 / NRRL B-23932 / Pf-5).